Here is a 139-residue protein sequence, read N- to C-terminus: Large ribosomal subunit protein uL16c (139 aa).

Over residues 1 to 17 (MLSPKKTKFRKQHRGRM) the composition is skewed to basic residues. The segment at 1–23 (MLSPKKTKFRKQHRGRMKGSASK) is disordered.

This sequence belongs to the universal ribosomal protein uL16 family. Part of the 50S ribosomal subunit.

It is found in the plastid. The protein localises to the chloroplast. This chain is Large ribosomal subunit protein uL16c, found in Pyropia yezoensis (Susabi-nori).